The chain runs to 190 residues: dCTP deaminase (190 aa).

Residue 113–118 (KSTYAR) participates in dCTP binding. The active-site Proton donor/acceptor is glutamate 139. DCTP is bound by residues glutamine 158, tyrosine 172, lysine 181, and glutamine 182.

Belongs to the dCTP deaminase family. In terms of assembly, homotrimer.

The enzyme catalyses dCTP + H2O + H(+) = dUTP + NH4(+). It functions in the pathway pyrimidine metabolism; dUMP biosynthesis; dUMP from dCTP (dUTP route): step 1/2. Catalyzes the deamination of dCTP to dUTP. The polypeptide is dCTP deaminase (Chlamydia abortus (strain DSM 27085 / S26/3) (Chlamydophila abortus)).